A 347-amino-acid polypeptide reads, in one-letter code: UPF0284 protein M1425_0030 (347 aa).

This sequence belongs to the UPF0284 family.

The protein is UPF0284 protein M1425_0030 of Saccharolobus islandicus (strain M.14.25 / Kamchatka #1) (Sulfolobus islandicus).